We begin with the raw amino-acid sequence, 108 residues long: UPF0145 protein Fnod_0426 (108 aa).

It belongs to the UPF0145 family.

The polypeptide is UPF0145 protein Fnod_0426 (Fervidobacterium nodosum (strain ATCC 35602 / DSM 5306 / Rt17-B1)).